We begin with the raw amino-acid sequence, 844 residues long: SWI/SNF-related matrix-associated actin-dependent regulator of chromatin subfamily A containing DEAD/H box 1 homolog (844 aa).

Residues 1–23 (MSDSTVAASASASASSSAKSSLS) are compositionally biased toward low complexity. Disordered regions lie at residues 1–75 (MSDS…TKLE) and 121–180 (NCKP…STKM). The span at 30–42 (INKNASSVVASPS) shows a compositional bias: polar residues. The 171-residue stretch at 301 to 471 (TVMHKQEMNG…ISLLCFVMPK (171 aa)) folds into the Helicase ATP-binding domain. Position 314–321 (314–321 (DEMGLGKT)) interacts with ATP. A DEGH box motif is present at residues 422–425 (DEAH). The Helicase C-terminal domain maps to 656 to 818 (YLDTLLPKLK…EQRCVVKLLT (163 aa)). Serine 834, serine 838, and serine 841 each carry phosphoserine.

Belongs to the SNF2/RAD54 helicase family.

It localises to the nucleus. It carries out the reaction ATP + H2O = ADP + phosphate + H(+). In terms of biological role, DNA helicase that possesses intrinsic ATP-dependent nucleosome-remodeling activity and is both required for DNA repair and heterochromatin organization. Promotes DNA end resection of double-strand breaks (DSBs) following DNA damage: probably acts by weakening histone DNA interactions in nucleosomes flanking DSBs. This chain is SWI/SNF-related matrix-associated actin-dependent regulator of chromatin subfamily A containing DEAD/H box 1 homolog (Etl1), found in Drosophila melanogaster (Fruit fly).